The primary structure comprises 144 residues: Large ribosomal subunit protein uL15 (144 aa).

The tract at residues 1 to 57 (MKLNDLSPAPGSRREKHRPGRGIGSGLGKTGGRGHKGQTSRSGGSIAPGFEGGQQPL) is disordered. The span at 21–31 (RGIGSGLGKTG) shows a compositional bias: gly residues.

The protein belongs to the universal ribosomal protein uL15 family. In terms of assembly, part of the 50S ribosomal subunit.

Binds to the 23S rRNA. The polypeptide is Large ribosomal subunit protein uL15 (Pseudomonas putida (strain ATCC 700007 / DSM 6899 / JCM 31910 / BCRC 17059 / LMG 24140 / F1)).